The chain runs to 348 residues: Dihydroorotase (348 aa).

2 residues coordinate Zn(2+): H17 and H19. Substrate is bound by residues 19 to 21 (HLR) and N45. Zn(2+) is bound by residues K103, H140, and H178. K103 carries the post-translational modification N6-carboxylysine. A substrate-binding site is contributed by H140. L223 provides a ligand contact to substrate. D251 contacts Zn(2+). D251 is a catalytic residue. The substrate site is built by H255 and A267.

Belongs to the metallo-dependent hydrolases superfamily. DHOase family. Class II DHOase subfamily. In terms of assembly, homodimer. Requires Zn(2+) as cofactor.

The enzyme catalyses (S)-dihydroorotate + H2O = N-carbamoyl-L-aspartate + H(+). Its pathway is pyrimidine metabolism; UMP biosynthesis via de novo pathway; (S)-dihydroorotate from bicarbonate: step 3/3. Functionally, catalyzes the reversible cyclization of carbamoyl aspartate to dihydroorotate. In Salmonella typhimurium (strain LT2 / SGSC1412 / ATCC 700720), this protein is Dihydroorotase.